Reading from the N-terminus, the 260-residue chain is MGRFPSWVLVADWPAPPGVMVLSTLRGGPGVSVAPFDRLNLGNCSGVAGDAPVCVERNRSRLVEMLGLPSVPHWLRQVHGVEVLRVDALLQSIARVVEPTADAAVTSVVGAVLAILTADCLPVVLAAVDGSEIGVVHAGWRGLADDVLGRTVAALRTSPEYLQAWLGPAAGPQAYEVGVDVYAAFVERDSGAACAFSVTRPGHWYVDLYALARQRLMRAGLSAVSIYGGGLCTISDPQRFFSHRRDRRSGRFATLAWIGC.

Histidine 79, cysteine 120, and histidine 137 together coordinate Zn(2+).

This sequence belongs to the purine nucleoside phosphorylase YfiH/LACC1 family. Homodimer. The cofactor is Cu(2+). Zn(2+) is required as a cofactor.

The catalysed reaction is adenosine + phosphate = alpha-D-ribose 1-phosphate + adenine. It carries out the reaction S-methyl-5'-thioadenosine + phosphate = 5-(methylsulfanyl)-alpha-D-ribose 1-phosphate + adenine. The enzyme catalyses inosine + phosphate = alpha-D-ribose 1-phosphate + hypoxanthine. It catalyses the reaction adenosine + H2O + H(+) = inosine + NH4(+). Functionally, purine nucleoside enzyme that catalyzes the phosphorolysis of adenosine and inosine nucleosides, yielding D-ribose 1-phosphate and the respective free bases, adenine and hypoxanthine. Also catalyzes the phosphorolysis of S-methyl-5'-thioadenosine into adenine and S-methyl-5-thio-alpha-D-ribose 1-phosphate. Also has adenosine deaminase activity. This is Purine nucleoside phosphorylase XF_0940 from Xylella fastidiosa (strain 9a5c).